The chain runs to 517 residues: Splicing factor cactin (517 aa).

Residues 1-14 are compositionally biased toward basic and acidic residues; sequence MAFRDSTRDFNRSR. Residues 1 to 59 are disordered; the sequence is MAFRDSTRDFNRSRPEKRHASRSSSPRSFRPSNQNARANYNLPRVRDAMKEEERSRETK. A compositionally biased stretch (low complexity) spans 22-32; sequence RSSSPRSFRPS. Residues 44 to 59 are compositionally biased toward basic and acidic residues; that stretch reads RVRDAMKEEERSRETK.

It belongs to the CACTIN family. In terms of assembly, interacts with sde2. Interacts with cdc5.

In terms of biological role, plays a role in pre-mRNA splicing by facilitating excision of introns featuring long spacing between the branchpoint and 3'-splice site (ss). Recruited to the spliceosome by sde2, which may enable folding of the RNA between the BP and 3'-ss to guide the splice site towards the spliceosome's catalytic center. Assists the splicing of several components involved in chromatin organization. The chain is Splicing factor cactin from Schizosaccharomyces pombe (strain 972 / ATCC 24843) (Fission yeast).